The chain runs to 237 residues: MSRETTTKDLDSLRALAERGAAELQDASAEELLRWTDENFGGNYVVASNMQDAVLVDLAAQVRPGVDVLFLDTGYHFAETIGTRDAVESVYDIHVVNVAPEQTVAQQDELVGKDLFASDPGECCRLRKVVPLRKSLAGYAAWVTGLRRVDAPTRANAPLISFDEAFGLVKINAIAAWTDEDMQKYIDEHGTLVNPLVDEGYPSIGCAPCTAKPVLGGDARSGRWQGLAKTECGLHAS.

[4Fe-4S] cluster-binding residues include Cys123, Cys124, Cys206, and Cys209. Residue Cys232 is the Nucleophile; cysteine thiosulfonate intermediate of the active site.

This sequence belongs to the PAPS reductase family. CysH subfamily. It depends on [4Fe-4S] cluster as a cofactor.

The protein resides in the cytoplasm. It carries out the reaction [thioredoxin]-disulfide + sulfite + AMP + 2 H(+) = adenosine 5'-phosphosulfate + [thioredoxin]-dithiol. It functions in the pathway sulfur metabolism; hydrogen sulfide biosynthesis; sulfite from sulfate. Functionally, catalyzes the formation of sulfite from adenosine 5'-phosphosulfate (APS) using thioredoxin as an electron donor. In Mycobacteroides abscessus (strain ATCC 19977 / DSM 44196 / CCUG 20993 / CIP 104536 / JCM 13569 / NCTC 13031 / TMC 1543 / L948) (Mycobacterium abscessus), this protein is Adenosine 5'-phosphosulfate reductase.